The primary structure comprises 267 residues: NAD kinase (267 aa).

The active-site Proton acceptor is the aspartate 52. Residues 52–53 (DG), arginine 57, 121–122 (NE), arginine 132, lysine 150, aspartate 152, 163–168 (TAYSLS), and alanine 187 contribute to the NAD(+) site.

The protein belongs to the NAD kinase family. The cofactor is a divalent metal cation.

It is found in the cytoplasm. It carries out the reaction NAD(+) + ATP = ADP + NADP(+) + H(+). In terms of biological role, involved in the regulation of the intracellular balance of NAD and NADP, and is a key enzyme in the biosynthesis of NADP. Catalyzes specifically the phosphorylation on 2'-hydroxyl of the adenosine moiety of NAD to yield NADP. The polypeptide is NAD kinase (Fusobacterium nucleatum subsp. nucleatum (strain ATCC 25586 / DSM 15643 / BCRC 10681 / CIP 101130 / JCM 8532 / KCTC 2640 / LMG 13131 / VPI 4355)).